The chain runs to 201 residues: 3-isopropylmalate dehydratase small subunit (201 aa).

This sequence belongs to the LeuD family. LeuD type 1 subfamily. As to quaternary structure, heterodimer of LeuC and LeuD.

The enzyme catalyses (2R,3S)-3-isopropylmalate = (2S)-2-isopropylmalate. It participates in amino-acid biosynthesis; L-leucine biosynthesis; L-leucine from 3-methyl-2-oxobutanoate: step 2/4. Catalyzes the isomerization between 2-isopropylmalate and 3-isopropylmalate, via the formation of 2-isopropylmaleate. This Dinoroseobacter shibae (strain DSM 16493 / NCIMB 14021 / DFL 12) protein is 3-isopropylmalate dehydratase small subunit.